Here is a 100-residue protein sequence, read N- to C-terminus: Cystatin-B (100 aa).

A Cystatin domain is found at 6–88 (GGISAPLDAD…GGGLELSGMQ (83 aa)). The Secondary area of contact signature appears at 48–52 (QIVSG).

This sequence belongs to the cystatin family. In terms of tissue distribution, widely expressed. Highly expressed in liver and to a lesser extent in spleen, gill, brain, intestine, kidney, head kidney and blood. Lowest level in muscle.

Its subcellular location is the cytoplasm. Its function is as follows. Thiol protease inhibitor. Has papain inhibitory activity in vitro. May be involved in immune responses against invading Gram-negative bacteria. In Oplegnathus fasciatus (Barred knifejaw), this protein is Cystatin-B.